A 419-amino-acid chain; its full sequence is Dual specificity protein phosphatase 7 (419 aa).

A disordered region spans residues 1–47 (MKNQLRGPPARAHMSTSGAAAAGGTRAGSEPGAGSGSGAGTGAGAAT). The segment covering 10 to 29 (ARAHMSTSGAAAAGGTRAGS) has biased composition (low complexity). Positions 31–47 (PGAGSGSGAGTGAGAAT) are enriched in gly residues. The Rhodanese domain occupies 68-187 (GGASLLLLDC…FQTEYSEHCE (120 aa)). The tract at residues 216–240 (CSDGESDRELPSSATESDGSPVPSS) is disordered. Residues 227-240 (SSATESDGSPVPSS) show a composition bias toward polar residues. One can recognise a Tyrosine-protein phosphatase domain in the interval 244–387 (FPVQILPYLY…LLDFERTLGL (144 aa)). Catalysis depends on C331, which acts as the Phosphocysteine intermediate. 331 to 337 (CLAGISR) is a binding site for substrate.

The protein belongs to the protein-tyrosine phosphatase family. Non-receptor class dual specificity subfamily. In terms of assembly, interacts with MAPK1/ERK2; the interaction enhances DUSP7 phosphatase activity. Strongly expressed in liver. Expressed at significantly higher levels in malignant hematopoietic cells than in corresponding non-malignant cells.

Its subcellular location is the cytoplasm. The enzyme catalyses O-phospho-L-tyrosyl-[protein] + H2O = L-tyrosyl-[protein] + phosphate. The catalysed reaction is O-phospho-L-seryl-[protein] + H2O = L-seryl-[protein] + phosphate. It carries out the reaction O-phospho-L-threonyl-[protein] + H2O = L-threonyl-[protein] + phosphate. With respect to regulation, strongly inhibited by sodium orthovanadate. Dual specificity protein phosphatase. Shows high activity towards MAPK1/ERK2. Also has lower activity towards MAPK14 and MAPK8. In arrested oocytes, plays a role in meiotic resumption. Promotes nuclear envelope breakdown and activation of the CDK1/Cyclin-B complex in oocytes, probably by dephosphorylating and inactivating the conventional protein kinase C (cPKC) isozyme PRKCB. May also inactivate PRKCA and/or PRKCG. Also important in oocytes for normal chromosome alignment on the metaphase plate and progression to anaphase, where it might regulate activity of the spindle-assembly checkpoint (SAC) complex. This is Dual specificity protein phosphatase 7 from Homo sapiens (Human).